Consider the following 497-residue polypeptide: uncharacterized protein (497 aa).

Positions 44–74 are enriched in basic and acidic residues; the sequence is IRQEKEMKRHDDDGRQYQSDRKFAKSKHDDI. Disordered stretches follow at residues 44-95, 120-151, and 195-227; these read IRQE…SVGR, VSRS…EHRD, and GNVI…TSAR. Over residues 120-131 the composition is skewed to low complexity; that stretch reads VSRSSSIGHSGS. Phosphoserine is present on residues Ser-123, Ser-125, and Ser-131. A Phosphothreonine modification is found at Thr-132. Residues 213–227 are compositionally biased toward low complexity; it reads ASLSRAASNSSTSAR. Thr-258 is modified (phosphothreonine). Position 310 is a phosphoserine (Ser-310). A compositionally biased stretch (polar residues) spans 367 to 385; sequence NVNPSNQDLASVKQPSGFS. A disordered region spans residues 367-497; sequence NVNPSNQDLA…GFPDTSRPPH (131 aa). The span at 400–409 shows a compositional bias: low complexity; the sequence is NFSNDDSSFF. Ser-436 is subject to Phosphoserine. Residues 448 to 472 are compositionally biased toward low complexity; that stretch reads GLSSGASIPSAPPGFGYQQPSFPYS.

The protein resides in the cytoplasm. The protein localises to the nucleus. This is an uncharacterized protein from Schizosaccharomyces pombe (strain 972 / ATCC 24843) (Fission yeast).